The chain runs to 644 residues: Fidgetin-like protein 2 (644 aa).

2 disordered regions span residues 1 to 36 and 285 to 323; these read MHWTPEHAQPLNQWPEQHLDVSSTTPSPAHKLELPP and AADGASYPAADDTECRGNGFRSKPPGATEDGTGKYGGGG. The segment covering 10–27 has biased composition (polar residues); that stretch reads PLNQWPEQHLDVSSTTPS. Low complexity predominate over residues 285–294; sequence AADGASYPAA. ATP is bound by residues Ala-390 and 430 to 435; that span reads GCGKAL.

Belongs to the AAA ATPase family. Mg(2+) serves as cofactor.

The protein resides in the cytoplasm. It is found in the cell cortex. The catalysed reaction is ATP + H2O = ADP + phosphate + H(+). Functionally, microtubule-severing enzyme that negatively regulates cell migration and wound healing. In migrating cells, targets dynamic microtubules (MTs) at the leading edge and severs them, thereby suppressing motility. Microtubule severing releases ARHGEF2 which activates RHOA, which in turn regulates focal ahesion turnover via focal adhesion kinase, as opposed to F-actin polymerization, to suppress cell motility. Negative regulator of axon regeneration that suppresses axonal growth by selectively severing dynamic MTs in the distal axon shaft and growth cone. Contributes to proper cell branching during endothelial and neuronal development. This chain is Fidgetin-like protein 2 (Fignl2), found in Mus musculus (Mouse).